The sequence spans 131 residues: Small ribosomal subunit protein uS11 (131 aa).

The protein belongs to the universal ribosomal protein uS11 family. Part of the 30S ribosomal subunit. Interacts with proteins S7 and S18. Binds to IF-3.

Functionally, located on the platform of the 30S subunit, it bridges several disparate RNA helices of the 16S rRNA. Forms part of the Shine-Dalgarno cleft in the 70S ribosome. This is Small ribosomal subunit protein uS11 from Exiguobacterium sibiricum (strain DSM 17290 / CCUG 55495 / CIP 109462 / JCM 13490 / 255-15).